A 254-amino-acid chain; its full sequence is Flavin-dependent thymidylate synthase (254 aa).

A ThyX domain is found at 7-237; sequence LRVQLIAKTE…PAVFADFEIT (231 aa). DUMP-binding positions include 92–95, 103–107, and H176; these read ELIR and QLSQR. Residues 95 to 97 and Q103 contribute to the FAD site; that span reads RHR. The short motif at 95-105 is the ThyX motif element; that stretch reads RHRHFSYSQLS. Residues 192-194 and H198 contribute to the FAD site; that span reads NYR. DUMP is bound at residue R203. The active-site Involved in ionization of N3 of dUMP, leading to its activation is the R203.

This sequence belongs to the thymidylate synthase ThyX family. As to quaternary structure, homotetramer. FAD serves as cofactor.

The catalysed reaction is dUMP + (6R)-5,10-methylene-5,6,7,8-tetrahydrofolate + NADPH + H(+) = dTMP + (6S)-5,6,7,8-tetrahydrofolate + NADP(+). It participates in pyrimidine metabolism; dTTP biosynthesis. Its function is as follows. Catalyzes the reductive methylation of 2'-deoxyuridine-5'-monophosphate (dUMP) to 2'-deoxythymidine-5'-monophosphate (dTMP) while utilizing 5,10-methylenetetrahydrofolate (mTHF) as the methyl donor, and NADPH and FADH(2) as the reductant. The sequence is that of Flavin-dependent thymidylate synthase from Mycobacterium leprae (strain Br4923).